The chain runs to 191 residues: MKVILASASERRQELLKRIIDDFEIIVSDFDESTVKFNGDFSVYVQELAKGKAESVAKDIKEDAIVIGCDTIVAFNGKVLGKPKDETHAFNMLKALSGNVHSVYSGIAVLDTKNNNISTESVCTNVKFSTITNEKINKYISTKEPMDKAGAYGIQGLGGVFVEEINGDYYNVVGLPLNRLYKIFGDMGVNL.

Residue D70 is the Proton acceptor of the active site.

Belongs to the Maf family. YhdE subfamily. A divalent metal cation serves as cofactor.

It localises to the cytoplasm. It carries out the reaction dTTP + H2O = dTMP + diphosphate + H(+). The catalysed reaction is UTP + H2O = UMP + diphosphate + H(+). Its function is as follows. Nucleoside triphosphate pyrophosphatase that hydrolyzes dTTP and UTP. May have a dual role in cell division arrest and in preventing the incorporation of modified nucleotides into cellular nucleic acids. This Clostridium novyi (strain NT) protein is dTTP/UTP pyrophosphatase.